Reading from the N-terminus, the 279-residue chain is Topoisomerase I damage affected protein 4 (279 aa).

Topologically, residues 1-32 (MNANSTTTAIGLTSPFEKLSFFPHSSNLILAH) are extracellular. Residues 33–53 (LHEIIFSFVFYQLAFSVVAPF) traverse the membrane as a helical segment. Topologically, residues 54-79 (LNKVVFRKHYTTIRDPLLKIDFNVHT) are cytoplasmic. One can recognise a TLC domain in the interval 70-271 (LLKIDFNVHT…MIRIAKKLAK (202 aa)). A helical transmembrane segment spans residues 80–100 (VSMIQAVVSNTVLLPTLTTPM). The Extracellular segment spans residues 101–110 (HYNVVTYTDS). Residues 111-131 (YSSMVSSLSAGYFIWDLTMCV) traverse the membrane as a helical segment. The Cytoplasmic portion of the chain corresponds to 132-135 (RYFK). A helical transmembrane segment spans residues 136–156 (LYGLEFTGHAIGSVYVMLLSL). The Extracellular segment spans residues 157 to 162 (RPFCQP). The chain crosses the membrane as a helical span at residues 163-183 (WIGRFLIYEASTPFVNINWFI). The Cytoplasmic portion of the chain corresponds to 184–192 (MQCNAKSKN). The helical transmembrane segment at 193-213 (SIPLWFNVVNGLLLMTVFFVV) threads the bilayer. The Extracellular segment spans residues 214-238 (RICWGSIASALLFRQMWKVRDELPK). Residues 239-259 (FSAVTMMSLNIFMNLLNVLWF) form a helical membrane-spanning segment. The Cytoplasmic portion of the chain corresponds to 260 to 279 (KKMIRIAKKLAKPAPTSKLD).

The protein belongs to the TMEM56 family.

Its subcellular location is the membrane. This chain is Topoisomerase I damage affected protein 4 (TDA4), found in Saccharomyces cerevisiae (strain ATCC 204508 / S288c) (Baker's yeast).